Consider the following 508-residue polypeptide: Photosystem II CP47 reaction center protein (508 aa).

6 consecutive transmembrane segments (helical) span residues 21–36 (SVHIMHTALVAGWAGS), 101–115 (IVFSGLCFLAAIWHW), 140–156 (GIHLFLSGVACFGFGAF), 203–218 (IAAGTLGILAGLFHLS), 237–252 (VLSSSIAAVFFAAFVV), and 457–472 (SFALLFFFGHIWHGSR).

The protein belongs to the PsbB/PsbC family. PsbB subfamily. PSII is composed of 1 copy each of membrane proteins PsbA, PsbB, PsbC, PsbD, PsbE, PsbF, PsbH, PsbI, PsbJ, PsbK, PsbL, PsbM, PsbT, PsbX, PsbY, PsbZ, Psb30/Ycf12, at least 3 peripheral proteins of the oxygen-evolving complex and a large number of cofactors. It forms dimeric complexes. Binds multiple chlorophylls. PSII binds additional chlorophylls, carotenoids and specific lipids. is required as a cofactor.

Its subcellular location is the plastid. The protein resides in the chloroplast thylakoid membrane. Its function is as follows. One of the components of the core complex of photosystem II (PSII). It binds chlorophyll and helps catalyze the primary light-induced photochemical processes of PSII. PSII is a light-driven water:plastoquinone oxidoreductase, using light energy to abstract electrons from H(2)O, generating O(2) and a proton gradient subsequently used for ATP formation. The protein is Photosystem II CP47 reaction center protein of Lepidium virginicum (Virginia pepperweed).